A 120-amino-acid polypeptide reads, in one-letter code: Ribonuclease P protein component (120 aa).

Belongs to the RnpA family. Consists of a catalytic RNA component (M1 or rnpB) and a protein subunit.

The catalysed reaction is Endonucleolytic cleavage of RNA, removing 5'-extranucleotides from tRNA precursor.. RNaseP catalyzes the removal of the 5'-leader sequence from pre-tRNA to produce the mature 5'-terminus. It can also cleave other RNA substrates such as 4.5S RNA. The protein component plays an auxiliary but essential role in vivo by binding to the 5'-leader sequence and broadening the substrate specificity of the ribozyme. This Latilactobacillus sakei subsp. sakei (strain 23K) (Lactobacillus sakei subsp. sakei) protein is Ribonuclease P protein component.